The chain runs to 48 residues: MSFDNNYHGGQGYAKGGLGCSYGCGLSGYGYACYCPWCYERSWFSGCF.

As to quaternary structure, interacts with hair keratins.

Its function is as follows. In the hair cortex, hair keratin intermediate filaments are embedded in an interfilamentous matrix, consisting of hair keratin-associated proteins (KRTAP), which are essential for the formation of a rigid and resistant hair shaft through their extensive disulfide bond cross-linking with abundant cysteine residues of hair keratins. The matrix proteins include the high-sulfur and high-glycine-tyrosine keratins. The protein is Keratin-associated protein 22-1 (KRTAP22-1) of Homo sapiens (Human).